The following is a 158-amino-acid chain: Coenzyme F420 hydrogenase subunit delta (158 aa).

The protein belongs to the peptidase A31 family.

In Methanothermobacter thermautotrophicus (strain ATCC 29096 / DSM 1053 / JCM 10044 / NBRC 100330 / Delta H) (Methanobacterium thermoautotrophicum), this protein is Coenzyme F420 hydrogenase subunit delta (frhD).